The sequence spans 44 residues: Viresin (44 aa).

The protein belongs to the insect A10/OS-D protein family.

The protein resides in the secreted. In terms of biological role, has antibacterial activity against the Gram-negative bacteria E.coli and E.cloacae, but not against the Gram-negative bacteria P.aeruginosa, P.vulgaris, K.pneumoniae and S.enteritidis or the Gram-positive bacteria S.aureus, S.epidermidis and S.salivarius. This chain is Viresin, found in Heliothis virescens (Tobacco budworm moth).